Reading from the N-terminus, the 564-residue chain is DNA ligase B (564 aa).

Lys-130 serves as the catalytic N6-AMP-lysine intermediate.

This sequence belongs to the NAD-dependent DNA ligase family. LigB subfamily.

The enzyme catalyses NAD(+) + (deoxyribonucleotide)n-3'-hydroxyl + 5'-phospho-(deoxyribonucleotide)m = (deoxyribonucleotide)n+m + AMP + beta-nicotinamide D-nucleotide.. Catalyzes the formation of phosphodiester linkages between 5'-phosphoryl and 3'-hydroxyl groups in double-stranded DNA using NAD as a coenzyme and as the energy source for the reaction. The protein is DNA ligase B of Klebsiella pneumoniae subsp. pneumoniae (strain ATCC 700721 / MGH 78578).